We begin with the raw amino-acid sequence, 149 residues long: Putative prefoldin subunit alpha (149 aa).

It belongs to the prefoldin subunit alpha family.

It is found in the cytoplasm. In terms of biological role, molecular chaperone capable of stabilizing a range of proteins. The protein is Putative prefoldin subunit alpha of Aquifex aeolicus (strain VF5).